The following is a 295-amino-acid chain: Hydroxyquinol 1,2-dioxygenase (295 aa).

Tyr-165, Tyr-200, His-224, and His-226 together coordinate Fe cation.

This sequence belongs to the intradiol ring-cleavage dioxygenase family. The cofactor is Fe(3+).

It catalyses the reaction benzene-1,2,4-triol + O2 = maleylacetate + 2 H(+). It participates in aromatic compound metabolism. In terms of biological role, involved in the gamma-resorcylate (2,6-dihydroxybenzoate) catabolism. Catalyzes the conversion of hydroxyquinol to malelylacetate. This Rhizobium sp. (strain MTP-10005) protein is Hydroxyquinol 1,2-dioxygenase.